A 59-amino-acid chain; its full sequence is Potassium channel toxin alpha-KTx 15.2 (59 aa).

Residues 1-22 (MKFSSIILLTLLICSMSKFGNC) form the signal peptide. Glutamine 23 is subject to Pyrrolidone carboxylic acid. Intrachain disulfides connect cysteine 30–cysteine 50, cysteine 35–cysteine 55, and cysteine 39–cysteine 57.

Belongs to the short scorpion toxin superfamily. Potassium channel inhibitor family. Alpha-KTx 15 subfamily. Expressed by the venom gland.

The protein resides in the secreted. Its function is as follows. Blocks both human ERG1/Kv11.1/KCNH2 potassium channels (in a reversible manner) and A-type voltage-gated potassium channels Kv4/KCND (in an irreversible manner). The presence of the Kv4-associated proteins DPP6 or DPP10 is mandatory to have high-affinity blockade of Kv4.2/KCND2 and Kv4.3/KCND3 channels. In contrast, the presence of the Kv4-associated protein KChIP1/KCNIP1 does not enhance the affinity blockade. May dispose of two functional faces (A and B); the two basic residues (Arg-40 and Lys-41) on the alpha-helix side of the peptide that blocks the hERG current (face A) and the typical dyad through which it blocks A-type currents on the beta-sheet side (face B). In adult rat brain, it binds to sites in the striatum, hippocampus, superior colliculus, and cerebellum. It shares the same target in rat brain than AaTX1 (AC Q867F4) and AmmTX3 (AC P60208). In DPP6 knockout mice, A-type currents are much less affected by the toxin than in wild-type mice. This chain is Potassium channel toxin alpha-KTx 15.2, found in Olivierus martensii (Manchurian scorpion).